The chain runs to 615 residues: Vitamin B12 transporter BtuB (615 aa).

The first 20 residues, 1–20 (MIKKVSLMTALSVTAFSGWA), serve as a signal peptide directing secretion. The TonB box signature appears at 25–32 (DSLVVTAN). The TBDR plug domain occupies 37–151 (PANTVLAPTS…IGGVVNIITT (115 aa)). Cyanocob(III)alamin is bound by residues S84, N91, and 109–110 (VT). The TBDR beta-barrel domain maps to 154-615 (KDGTTLNAGV…EYTLSGSYTF (462 aa)). Beta stranded transmembrane passes span 157 to 164 (TTLNAGVG), 168 to 177 (YQNYGGSTQQ), and 183 to 194 (TRVTLAGDYTYT). The Ca(2+) site is built by D198, Q210, D212, and D214. 2 beta stranded membrane passes run 216-226 (YMNKTIYGALE) and 231-247 (DQWS…NRTA). 2 residues coordinate Ca(2+): Y248 and D249. A250 contacts cyanocob(III)alamin. D262 lines the Ca(2+) pocket. The next 17 beta stranded transmembrane spans lie at 264 to 278 (RQLY…LRFN), 280 to 297 (GIFH…KDYN), 310 to 326 (TLDE…NSVD), 329 to 338 (HGNVGAGVDW), 354 to 370 (TNLR…QKFG), 372 to 382 (FTLEGAARSDD), 386 to 401 (FGRH…WEFI), 404 to 418 (YRFI…KAPN), 435 to 444 (ESKQWEGAFE), 450 to 459 (VSWRVSAYRN), 474 to 491 (YYNV…TASF), 495 to 510 (PLTH…ARNA), 518 to 530 (RRAK…QLDT), 536 to 551 (DWSL…YDTD), 559 to 573 (KVKM…LAVS), 586 to 597 (IANLFDKDYETV), and 603 to 615 (AGRE…SYTF). T310 provides a ligand contact to cyanocob(III)alamin. R518 is a cyanocob(III)alamin binding site. A TonB C-terminal box motif is present at residues 598 to 615 (YGYETAGREYTLSGSYTF).

It belongs to the TonB-dependent receptor family. BtuB (TC 1.B.14.3.1) subfamily.

Its subcellular location is the cell outer membrane. Involved in the active translocation of vitamin B12 (cyanocobalamin) across the outer membrane to the periplasmic space. It derives its energy for transport by interacting with the trans-periplasmic membrane protein TonB. The protein is Vitamin B12 transporter BtuB of Enterobacter sp. (strain 638).